Consider the following 172-residue polypeptide: NADH-ubiquinone oxidoreductase chain 6 (172 aa).

5 helical membrane passes run 1-21, 26-48, 52-74, 86-106, and 147-167; these read MTNY…GLAL, IYGG…GFGG, GLMV…TAMA, WFIF…FYLF, and CATW…FIII.

The protein belongs to the complex I subunit 6 family. As to quaternary structure, core subunit of respiratory chain NADH dehydrogenase (Complex I) which is composed of 45 different subunits.

It is found in the mitochondrion inner membrane. It carries out the reaction a ubiquinone + NADH + 5 H(+)(in) = a ubiquinol + NAD(+) + 4 H(+)(out). Core subunit of the mitochondrial membrane respiratory chain NADH dehydrogenase (Complex I) which catalyzes electron transfer from NADH through the respiratory chain, using ubiquinone as an electron acceptor. Essential for the catalytic activity and assembly of complex I. The protein is NADH-ubiquinone oxidoreductase chain 6 of Rattus norvegicus (Rat).